A 356-amino-acid chain; its full sequence is Glycerol-1-phosphate dehydrogenase [NAD(P)+] (356 aa).

NAD(+)-binding positions include 103-107 and 125-128; these read GRSID and TAAS. D130 is a substrate binding site. NAD(+) is bound at residue S134. A substrate-binding site is contributed by D177. Residues D177 and H257 each coordinate Zn(2+). Position 261 (H261) interacts with substrate. Zn(2+) is bound at residue H273.

Belongs to the glycerol-1-phosphate dehydrogenase family. The cofactor is Zn(2+).

It is found in the cytoplasm. The catalysed reaction is sn-glycerol 1-phosphate + NAD(+) = dihydroxyacetone phosphate + NADH + H(+). It catalyses the reaction sn-glycerol 1-phosphate + NADP(+) = dihydroxyacetone phosphate + NADPH + H(+). The protein operates within membrane lipid metabolism; glycerophospholipid metabolism. In terms of biological role, catalyzes the NAD(P)H-dependent reduction of dihydroxyacetonephosphate (DHAP or glycerone phosphate) to glycerol 1-phosphate (G1P). The G1P thus generated is used as the glycerophosphate backbone of phospholipids in the cellular membranes of Archaea. This is Glycerol-1-phosphate dehydrogenase [NAD(P)+] from Methanosarcina barkeri (strain Fusaro / DSM 804).